Here is a 285-residue protein sequence, read N- to C-terminus: Malonyl-[acyl-carrier protein] O-methyltransferase (285 aa).

Belongs to the methyltransferase superfamily.

It carries out the reaction malonyl-[ACP] + S-adenosyl-L-methionine = malonyl-[ACP] methyl ester + S-adenosyl-L-homocysteine. The protein operates within cofactor biosynthesis; biotin biosynthesis. Converts the free carboxyl group of a malonyl-thioester to its methyl ester by transfer of a methyl group from S-adenosyl-L-methionine (SAM). It allows to synthesize pimeloyl-ACP via the fatty acid synthetic pathway. The polypeptide is Malonyl-[acyl-carrier protein] O-methyltransferase (Bacillus cytotoxicus (strain DSM 22905 / CIP 110041 / 391-98 / NVH 391-98)).